The sequence spans 263 residues: Imidazole glycerol phosphate synthase subunit HisF (263 aa).

Catalysis depends on residues Asp-11 and Asp-130.

Belongs to the HisA/HisF family. In terms of assembly, heterodimer of HisH and HisF.

Its subcellular location is the cytoplasm. The catalysed reaction is 5-[(5-phospho-1-deoxy-D-ribulos-1-ylimino)methylamino]-1-(5-phospho-beta-D-ribosyl)imidazole-4-carboxamide + L-glutamine = D-erythro-1-(imidazol-4-yl)glycerol 3-phosphate + 5-amino-1-(5-phospho-beta-D-ribosyl)imidazole-4-carboxamide + L-glutamate + H(+). It functions in the pathway amino-acid biosynthesis; L-histidine biosynthesis; L-histidine from 5-phospho-alpha-D-ribose 1-diphosphate: step 5/9. Functionally, IGPS catalyzes the conversion of PRFAR and glutamine to IGP, AICAR and glutamate. The HisF subunit catalyzes the cyclization activity that produces IGP and AICAR from PRFAR using the ammonia provided by the HisH subunit. This is Imidazole glycerol phosphate synthase subunit HisF from Herpetosiphon aurantiacus (strain ATCC 23779 / DSM 785 / 114-95).